Consider the following 82-residue polypeptide: MQANIFVFAFLLLSVAVAAYGYQPECLEPSLYGCRGDEDATFGWTFDREDGGCRQGSYCTRFGQPKNYFRSERDCKKACGNA.

The first 21 residues, 1-21 (MQANIFVFAFLLLSVAVAAYG), serve as a signal peptide directing secretion. 3 cysteine pairs are disulfide-bonded: Cys-26-Cys-79, Cys-34-Cys-59, and Cys-53-Cys-75. A Cell attachment site motif is present at residues 35–37 (RGD).

In terms of tissue distribution, expressed in salivary glands.

It localises to the cytoplasmic vesicle. The protein resides in the secretory vesicle. Its subcellular location is the secreted. Tick salivary platelet aggregation inhibitor that plays an important part in the anti-hemostatic strategy of ticks. Inhibits platelet aggregation induced by ADP (IC(50)=130 nM), collagen, the thrombin receptor-activating peptide, and epinephrine, although platelets are activated and their shape changed. Binding to platelets is similar for resting and activated platelets (Kd=50-70 nM). Acts by specifically binding to platelet membrane glycoprotein IIb-IIIa (ITGA2B/ITGB3) in a divalent metal ion dependent manner. In contrast to many disintegrins which only interacts with the beta-3 subunit, this protein interacts with the two subunits (alpha-IIb and beta-3). Also causes disaggregation of aggregated platelets without influencing the activated spherical shape associated with aggregated platelets and causes a decrease in the number of pseudopodia on the activated platelet surface. Does not show any inhibitory activity for the different serine proteases tested. This chain is Savignygrin (+), found in Ornithodoros kalahariensis (Tick).